We begin with the raw amino-acid sequence, 523 residues long: Butyrophilin subfamily 2 member A2 (523 aa).

Positions 1–32 (MEPAAALHFSLPASLLLLLLLLLLSLCALVSA) are cleaved as a signal peptide. Residues 33–265 (QFTVVGPANP…AVILTASPWM (233 aa)) are Extracellular-facing. In terms of domain architecture, Ig-like V-type spans 34–145 (FTVVGPANPI…SYDEAILRLV (112 aa)). N-linked (GlcNAc...) asparagine glycans are attached at residues asparagine 50, asparagine 118, asparagine 220, and asparagine 226. Cysteine 55 and cysteine 129 are joined by a disulfide. Residues 153–234 (PLIEIKAQED…VNNTLLGQEK (82 aa)) form the Ig-like C2-type domain. A helical membrane pass occupies residues 266 to 286 (VSMTVILAVFIIFMAVSICCI). A coiled-coil region spans residues 286 to 321 (IKKLQREKKILSGEKKVEQEEKEIAQQLQEELRWRR). Over 287–523 (KKLQREKKIL…LHRVGTHQSL (237 aa)) the chain is Cytoplasmic. The region spanning 309-502 (IAQQLQEELR…IFICPALTGA (194 aa)) is the B30.2/SPRY domain.

Belongs to the immunoglobulin superfamily. BTN/MOG family. Post-translationally, N-glycosylated. Highly expressed in brain, bone marrow, small intestine, muscle, spleen and pancreas. Moderate expression was seen in lung, liver and kidney.

It is found in the membrane. Functionally, inhibits the proliferation of CD4 and CD8 T-cells activated by anti-CD3 antibodies, T-cell metabolism and IL2 and IFNG secretion. The protein is Butyrophilin subfamily 2 member A2 (BTN2A2) of Homo sapiens (Human).